A 111-amino-acid chain; its full sequence is Nucleoid-associated protein CT0805 (111 aa).

Belongs to the YbaB/EbfC family. Homodimer.

It is found in the cytoplasm. It localises to the nucleoid. Its function is as follows. Binds to DNA and alters its conformation. May be involved in regulation of gene expression, nucleoid organization and DNA protection. The chain is Nucleoid-associated protein CT0805 from Chlorobaculum tepidum (strain ATCC 49652 / DSM 12025 / NBRC 103806 / TLS) (Chlorobium tepidum).